The chain runs to 204 residues: MDRVVLLLSVLSLGVSSQPITDSQRLFSIAVSRVQHLHLLAQRRFSEFESSLQTEEQRQLNKIFLQDFCNSDYIISPIDKHETQRSSVLKLLSISYRLVESWEFSSRSLSGGSAPRDQISPKLSELKTGILLLIRANQDGAEMFSDSSALQLAPYGNYYQSLGADESLRRTYELLACFKKDMHKVETYLTVAKCRLSPEANCTL.

The first 17 residues, 1-17 (MDRVVLLLSVLSLGVSS), serve as a signal peptide directing secretion. Pyrrolidone carboxylic acid is present on Gln-18. Position 36 (His-36) interacts with Zn(2+). Cys-69 and Cys-177 are disulfide-bonded. Zn(2+) is bound at residue Glu-186. An intrachain disulfide couples Cys-194 to Cys-202.

This sequence belongs to the somatotropin/prolactin family.

It localises to the secreted. In terms of biological role, growth hormone plays an important role in growth control and is involved in the regulation of several anabolic processes. Implicated as an osmoregulatory substance important for seawater adaptation. This is Somatotropin (gh) from Lates calcarifer (Barramundi).